Reading from the N-terminus, the 490-residue chain is Nicotinate phosphoribosyltransferase (490 aa).

His206 is subject to Phosphohistidine.

The protein belongs to the NAPRTase family. In terms of processing, transiently phosphorylated on a His residue during the reaction cycle. Phosphorylation strongly increases the affinity for substrates and increases the rate of nicotinate D-ribonucleotide production. Dephosphorylation regenerates the low-affinity form of the enzyme, leading to product release.

It catalyses the reaction nicotinate + 5-phospho-alpha-D-ribose 1-diphosphate + ATP + H2O = nicotinate beta-D-ribonucleotide + ADP + phosphate + diphosphate. The protein operates within cofactor biosynthesis; NAD(+) biosynthesis; nicotinate D-ribonucleotide from nicotinate: step 1/1. Catalyzes the synthesis of beta-nicotinate D-ribonucleotide from nicotinate and 5-phospho-D-ribose 1-phosphate at the expense of ATP. This chain is Nicotinate phosphoribosyltransferase (pncB), found in Bacillus subtilis (strain 168).